The primary structure comprises 228 residues: Urease accessory protein UreF (228 aa).

It belongs to the UreF family. In terms of assembly, ureD, UreF and UreG form a complex that acts as a GTP-hydrolysis-dependent molecular chaperone, activating the urease apoprotein by helping to assemble the nickel containing metallocenter of UreC. The UreE protein probably delivers the nickel.

Its subcellular location is the cytoplasm. Required for maturation of urease via the functional incorporation of the urease nickel metallocenter. In Prochlorococcus marinus (strain MIT 9312), this protein is Urease accessory protein UreF.